Consider the following 80-residue polypeptide: Raniseptin-7 (80 aa).

The signal sequence occupies residues 1–22; it reads MAFLKKSLFLVLFLGIVSLSIC. Positions 23–49 are excised as a propeptide; sequence EEEKREGEEEEKQEEENEELSEEELRE. Positions 27–46 are disordered; it reads REGEEEEKQEEENEELSEEE. Acidic residues predominate over residues 30-44; the sequence is EEEEKQEEENEELSE.

Belongs to the frog skin active peptide (FSAP) family. Dermaseptin subfamily. Expressed by the skin glands.

The protein localises to the secreted. Functionally, has antibacterial activity. The protein is Raniseptin-7 of Boana raniceps (Chaco tree frog).